We begin with the raw amino-acid sequence, 205 residues long: MIGRLKGILIEKQPPYLLLDVNGVGYELQAPMTTFYRLPSLGHEVVLHTHLSITENLHQLFGFAEQRDRSLFRTLIKVNGVGPKLAVAILSGMESDDIARCVRDNNIKALTRVPGIGQKTAERLVIELRDRLKNWDLPQGDMLAHGEIQAIASDNDIYAEAESALIALGYKPVDAAKMVASAAKQKPEARSEELIRIALRSLAGV.

The interval 1–64 (MIGRLKGILI…ENLHQLFGFA (64 aa)) is domain I. Residues 65–143 (EQRDRSLFRT…NWDLPQGDML (79 aa)) are domain II. The interval 144–153 (AHGEIQAIAS) is flexible linker. Residues 153-205 (SDNDIYAEAESALIALGYKPVDAAKMVASAAKQKPEARSEELIRIALRSLAGV) form a domain III region.

This sequence belongs to the RuvA family. As to quaternary structure, homotetramer. Forms an RuvA(8)-RuvB(12)-Holliday junction (HJ) complex. HJ DNA is sandwiched between 2 RuvA tetramers; dsDNA enters through RuvA and exits via RuvB. An RuvB hexamer assembles on each DNA strand where it exits the tetramer. Each RuvB hexamer is contacted by two RuvA subunits (via domain III) on 2 adjacent RuvB subunits; this complex drives branch migration. In the full resolvosome a probable DNA-RuvA(4)-RuvB(12)-RuvC(2) complex forms which resolves the HJ.

The protein localises to the cytoplasm. Its function is as follows. The RuvA-RuvB-RuvC complex processes Holliday junction (HJ) DNA during genetic recombination and DNA repair, while the RuvA-RuvB complex plays an important role in the rescue of blocked DNA replication forks via replication fork reversal (RFR). RuvA specifically binds to HJ cruciform DNA, conferring on it an open structure. The RuvB hexamer acts as an ATP-dependent pump, pulling dsDNA into and through the RuvAB complex. HJ branch migration allows RuvC to scan DNA until it finds its consensus sequence, where it cleaves and resolves the cruciform DNA. This Cellvibrio japonicus (strain Ueda107) (Pseudomonas fluorescens subsp. cellulosa) protein is Holliday junction branch migration complex subunit RuvA.